We begin with the raw amino-acid sequence, 71 residues long: Small ribosomal subunit protein bS21 (71 aa).

Positions 37–71 (HYEKPTQERKRKAAAAVKRHMKRLSREQARRRRLY) are disordered. Basic residues predominate over residues 45 to 71 (RKRKAAAAVKRHMKRLSREQARRRRLY).

This sequence belongs to the bacterial ribosomal protein bS21 family.

The chain is Small ribosomal subunit protein bS21 from Alkalilimnicola ehrlichii (strain ATCC BAA-1101 / DSM 17681 / MLHE-1).